Here is a 227-residue protein sequence, read N- to C-terminus: Cytidylate kinase (227 aa).

An ATP-binding site is contributed by 10–18 (GPSGSGKGT).

Belongs to the cytidylate kinase family. Type 1 subfamily.

It localises to the cytoplasm. The catalysed reaction is CMP + ATP = CDP + ADP. It carries out the reaction dCMP + ATP = dCDP + ADP. The polypeptide is Cytidylate kinase (Acinetobacter baylyi (strain ATCC 33305 / BD413 / ADP1)).